A 475-amino-acid chain; its full sequence is Sulfate adenylyltransferase subunit 1 (475 aa).

The 215-residue stretch at 25 to 239 (KSLLRFLTCG…EVLETVEIQR (215 aa)) folds into the tr-type G domain. A G1 region spans residues 34–41 (GSVDDGKS). GTP is bound at residue 34–41 (GSVDDGKS). The interval 92 to 96 (GITID) is G2. Positions 113 to 116 (DTPG) are G3. GTP contacts are provided by residues 113–117 (DTPGH) and 168–171 (NKMD). The interval 168–171 (NKMD) is G4. The interval 206-208 (SAL) is G5.

Belongs to the TRAFAC class translation factor GTPase superfamily. Classic translation factor GTPase family. CysN/NodQ subfamily. As to quaternary structure, heterodimer composed of CysD, the smaller subunit, and CysN.

The enzyme catalyses sulfate + ATP + H(+) = adenosine 5'-phosphosulfate + diphosphate. It participates in sulfur metabolism; hydrogen sulfide biosynthesis; sulfite from sulfate: step 1/3. Its function is as follows. With CysD forms the ATP sulfurylase (ATPS) that catalyzes the adenylation of sulfate producing adenosine 5'-phosphosulfate (APS) and diphosphate, the first enzymatic step in sulfur assimilation pathway. APS synthesis involves the formation of a high-energy phosphoric-sulfuric acid anhydride bond driven by GTP hydrolysis by CysN coupled to ATP hydrolysis by CysD. In Escherichia coli (strain 55989 / EAEC), this protein is Sulfate adenylyltransferase subunit 1.